Consider the following 73-residue polypeptide: V-type proton ATPase subunit e (73 aa).

At 1-3 (MSS) the chain is on the lumenal side. A helical transmembrane segment spans residues 4-24 (FYTVVGVFIVVSAMSVLFWIM). Residues 25 to 35 (APKNNQAVWRS) lie on the Cytoplasmic side of the membrane. A helical membrane pass occupies residues 36 to 56 (TVILTLAMMFLMWAITFLCQL). The Lumenal portion of the chain corresponds to 57 to 73 (HPLVAPRRSDLRPEFAE).

The protein belongs to the V-ATPase e1/e2 subunit family. As to quaternary structure, V-ATPase is a heteromultimeric enzyme composed of a peripheral catalytic V1 complex (components A to H) attached to an integral membrane V0 proton pore complex (components: a, c, c', c'', d, e, f and VOA1).

Its subcellular location is the vacuole membrane. Subunit of the V0 complex of vacuolar(H+)-ATPase (V-ATPase), a multisubunit enzyme composed of a peripheral complex (V1) that hydrolyzes ATP and a membrane integral complex (V0) that translocates protons. V-ATPase is responsible for acidifying and maintaining the pH of intracellular compartments. The polypeptide is V-type proton ATPase subunit e (VMA9) (Saccharomyces cerevisiae (strain ATCC 204508 / S288c) (Baker's yeast)).